A 91-amino-acid polypeptide reads, in one-letter code: uncharacterized protein (91 aa).

The protein belongs to the UPF0440 family.

This is an uncharacterized protein from Methanothermobacter thermautotrophicus (strain ATCC 29096 / DSM 1053 / JCM 10044 / NBRC 100330 / Delta H) (Methanobacterium thermoautotrophicum).